The chain runs to 78 residues: U7-lycotoxin-Ls1f (78 aa).

The N-terminal stretch at 1 to 22 is a signal peptide; it reads MKLIIFTGLALLLIVSLIDVEA. Residues 23-26 constitute a propeptide that is removed on maturation; that stretch reads QNEG.

The protein belongs to the neurotoxin 19 (CSTX) family. 07 (U7-Lctx) subfamily. In terms of processing, contains 4 disulfide bonds. As to expression, expressed by the venom gland.

The protein resides in the secreted. The chain is U7-lycotoxin-Ls1f from Lycosa singoriensis (Wolf spider).